A 530-amino-acid polypeptide reads, in one-letter code: Per os infectivity factor 1 (530 aa).

The signal sequence occupies residues 1 to 15 (MHFAIILLFLLVIIA).

Forms the PIF complex together with PIF2 and PIF3. The complex also interacts with per os infectivity factor PIF0.

The protein resides in the virion membrane. Functionally, per os infectivity factor that mediates the specific binding of occluded virions (ODV) to the host midgut target cells. This chain is Per os infectivity factor 1, found in Autographa californica nuclear polyhedrosis virus (AcMNPV).